Reading from the N-terminus, the 306-residue chain is Acetyl-coenzyme A carboxylase carboxyl transferase subunit beta (306 aa).

The CoA carboxyltransferase N-terminal domain maps to 25–294 (LWIKDPTSGE…VFNPSDPSPT (270 aa)). The disordered stretch occupies residues 286 to 306 (FNPSDPSPTDSQTSLSTTKAA). Residues 288–306 (PSDPSPTDSQTSLSTTKAA) show a composition bias toward low complexity.

The protein belongs to the AccD/PCCB family. In terms of assembly, acetyl-CoA carboxylase is a heterohexamer composed of biotin carboxyl carrier protein (AccB), biotin carboxylase (AccC) and two subunits each of ACCase subunit alpha (AccA) and ACCase subunit beta (AccD).

Its subcellular location is the cytoplasm. It carries out the reaction N(6)-carboxybiotinyl-L-lysyl-[protein] + acetyl-CoA = N(6)-biotinyl-L-lysyl-[protein] + malonyl-CoA. The protein operates within lipid metabolism; malonyl-CoA biosynthesis; malonyl-CoA from acetyl-CoA: step 1/1. In terms of biological role, component of the acetyl coenzyme A carboxylase (ACC) complex. Biotin carboxylase (BC) catalyzes the carboxylation of biotin on its carrier protein (BCCP) and then the CO(2) group is transferred by the transcarboxylase to acetyl-CoA to form malonyl-CoA. The chain is Acetyl-coenzyme A carboxylase carboxyl transferase subunit beta from Bartonella grahamii (strain as4aup).